Reading from the N-terminus, the 273-residue chain is 2,3,4,5-tetrahydropyridine-2,6-dicarboxylate N-succinyltransferase (273 aa).

R104 and D141 together coordinate substrate.

It belongs to the transferase hexapeptide repeat family. As to quaternary structure, homotrimer.

Its subcellular location is the cytoplasm. It catalyses the reaction (S)-2,3,4,5-tetrahydrodipicolinate + succinyl-CoA + H2O = (S)-2-succinylamino-6-oxoheptanedioate + CoA. Its pathway is amino-acid biosynthesis; L-lysine biosynthesis via DAP pathway; LL-2,6-diaminopimelate from (S)-tetrahydrodipicolinate (succinylase route): step 1/3. The sequence is that of 2,3,4,5-tetrahydropyridine-2,6-dicarboxylate N-succinyltransferase from Neisseria meningitidis serogroup A / serotype 4A (strain DSM 15465 / Z2491).